A 1019-amino-acid polypeptide reads, in one-letter code: Pleckstrin homology domain-containing family M member 2 (1019 aa).

Met1 carries the post-translational modification N-acetylmethionine. Positions 1 to 310 (MEPGEVKDRI…LDPPDACTEL (310 aa)) are interaction with KIF5B. The RUN domain occupies 36–158 (RNHDKVLQRL…IRFELDLDAP (123 aa)). Disordered regions lie at residues 230–458 (SVPS…SEGL), 471–525 (SPST…REAQ), and 557–581 (QPSP…SEMV). Composition is skewed to polar residues over residues 243 to 272 (DTVS…QNPF) and 279 to 291 (TVSS…VHTT). Over residues 315–327 (VTKKKKIGKKKKS) the composition is skewed to basic residues. A compositionally biased stretch (polar residues) spans 417–427 (LNGQLDPSTWC). A Phosphoserine modification is found at Ser441. Positions 516–525 (PLEDTTREAQ) are enriched in basic and acidic residues. Residues 762–885 (PCHCSPPEGT…VIPQGVAPSP (124 aa)) form an interaction with sifA region. The 103-residue stretch at 771-873 (TITKEGMLHY…WMQHLCQAVS (103 aa)) folds into the PH domain.

In terms of assembly, interacts with KLC2 (via TPR repeats). Interacts with KIF5B. Interacts with BORCS5. Interacts (via RUN domain) with ARL8B (GTP-bound form); PLEKHM1 and PLEKHM2 compete for interaction with ARL8B. Interacts with ARL8A. As to quaternary structure, (Microbial infection) Interacts with the S.typhimurium sifA protein; required for S.typhimurium infection.

It localises to the cytoplasm. Its subcellular location is the lysosome membrane. Plays a role in lysosomes movement and localization at the cell periphery acting as an effector of ARL8B. Required for ARL8B to exert its effects on lysosome location, recruits kinesin-1 to lysosomes and hence direct their movement toward microtubule plus ends. Binding to ARL8B provides a link from lysosomal membranes to plus-end-directed motility. Critical factor involved in NK cell-mediated cytotoxicity. Drives the polarization of cytolytic granules and microtubule-organizing centers (MTOCs) toward the immune synapse between effector NK lymphocytes and target cells. Required for maintenance of the Golgi apparatus organization. May play a role in membrane tubulation. The chain is Pleckstrin homology domain-containing family M member 2 from Homo sapiens (Human).